The sequence spans 83 residues: NAD(P)H-quinone oxidoreductase subunit L (83 aa).

2 helical membrane-spanning segments follow: residues 15–35 and 53–73; these read LMVLAAYVLLGGLYLIVVPLL and LSAYGMVFLFFPGLILFAPFL.

This sequence belongs to the complex I NdhL subunit family. In terms of assembly, NDH-1 can be composed of about 15 different subunits; different subcomplexes with different compositions have been identified which probably have different functions.

Its subcellular location is the cellular thylakoid membrane. The enzyme catalyses a plastoquinone + NADH + (n+1) H(+)(in) = a plastoquinol + NAD(+) + n H(+)(out). It carries out the reaction a plastoquinone + NADPH + (n+1) H(+)(in) = a plastoquinol + NADP(+) + n H(+)(out). NDH-1 shuttles electrons from an unknown electron donor, via FMN and iron-sulfur (Fe-S) centers, to quinones in the respiratory and/or the photosynthetic chain. The immediate electron acceptor for the enzyme in this species is believed to be plastoquinone. Couples the redox reaction to proton translocation, and thus conserves the redox energy in a proton gradient. Cyanobacterial NDH-1 also plays a role in inorganic carbon-concentration. In Prochlorococcus marinus (strain MIT 9303), this protein is NAD(P)H-quinone oxidoreductase subunit L.